Reading from the N-terminus, the 147-residue chain is Proteinase inhibitor type-2 (147 aa).

The signal sequence occupies residues 1–25; it reads MAVHKEVSFVAYLLIVLGMFLYVDA. 2 repeat units span residues 25 to 81 and 82 to 141. Cystine bridges form between Cys-28–Cys-116, Cys-32–Cys-112, Cys-40–Cys-122, Cys-52–Cys-89, Cys-55–Cys-73, Cys-56–Cys-85, Cys-62–Cys-98, and Cys-115–Cys-133.

The protein belongs to the protease inhibitor I20 (potato type II proteinase inhibitor) family.

This is Proteinase inhibitor type-2 from Solanum tuberosum (Potato).